The chain runs to 241 residues: Phosphoribosylaminoimidazole-succinocarboxamide synthase (241 aa).

This sequence belongs to the SAICAR synthetase family.

The catalysed reaction is 5-amino-1-(5-phospho-D-ribosyl)imidazole-4-carboxylate + L-aspartate + ATP = (2S)-2-[5-amino-1-(5-phospho-beta-D-ribosyl)imidazole-4-carboxamido]succinate + ADP + phosphate + 2 H(+). It functions in the pathway purine metabolism; IMP biosynthesis via de novo pathway; 5-amino-1-(5-phospho-D-ribosyl)imidazole-4-carboxamide from 5-amino-1-(5-phospho-D-ribosyl)imidazole-4-carboxylate: step 1/2. This chain is Phosphoribosylaminoimidazole-succinocarboxamide synthase, found in Lacticaseibacillus casei (strain BL23) (Lactobacillus casei).